A 427-amino-acid chain; its full sequence is Tol-Pal system protein TolB (427 aa).

An N-terminal signal peptide occupies residues 1–27 (MPVSLLRALLVFSLLCLGLSATRAAHA).

This sequence belongs to the TolB family. As to quaternary structure, the Tol-Pal system is composed of five core proteins: the inner membrane proteins TolA, TolQ and TolR, the periplasmic protein TolB and the outer membrane protein Pal. They form a network linking the inner and outer membranes and the peptidoglycan layer.

It is found in the periplasm. Part of the Tol-Pal system, which plays a role in outer membrane invagination during cell division and is important for maintaining outer membrane integrity. This is Tol-Pal system protein TolB from Thiobacillus denitrificans (strain ATCC 25259 / T1).